The primary structure comprises 173 residues: Translation initiation factor IF-3 (173 aa).

It belongs to the IF-3 family. Monomer.

It localises to the cytoplasm. Functionally, IF-3 binds to the 30S ribosomal subunit and shifts the equilibrium between 70S ribosomes and their 50S and 30S subunits in favor of the free subunits, thus enhancing the availability of 30S subunits on which protein synthesis initiation begins. The protein is Translation initiation factor IF-3 of Methylorubrum populi (strain ATCC BAA-705 / NCIMB 13946 / BJ001) (Methylobacterium populi).